The chain runs to 510 residues: Propionyl-CoA carboxylase beta chain (510 aa).

In terms of domain architecture, CoA carboxyltransferase N-terminal spans 1-257 (MKDILQELEN…SNRTPAPVRP (257 aa)). The interval 1–504 (MKDILQELEN…NKKLANPWKK (504 aa)) is carboxyltransferase. Residues 264 to 504 (RIEDSLDTLI…NKKLANPWKK (241 aa)) form the CoA carboxyltransferase C-terminal domain.

Belongs to the AccD/PCCB family. As to quaternary structure, probably a dodecamer composed of six biotin-containing alpha subunits and six beta subunits.

The enzyme catalyses propanoyl-CoA + hydrogencarbonate + ATP = (S)-methylmalonyl-CoA + ADP + phosphate + H(+). The protein operates within metabolic intermediate metabolism; propanoyl-CoA degradation; succinyl-CoA from propanoyl-CoA: step 1/3. The protein is Propionyl-CoA carboxylase beta chain of Cereibacter sphaeroides (strain ATCC 17023 / DSM 158 / JCM 6121 / CCUG 31486 / LMG 2827 / NBRC 12203 / NCIMB 8253 / ATH 2.4.1.) (Rhodobacter sphaeroides).